A 473-amino-acid chain; its full sequence is MKRASSGGSRLLAWVLWLQAWRVATPCPGACVCYNEPKVTTSCPQQGLQAVPTGIPASSQRIFLHGNRISYVPAASFQSCRNLTILWLHSNALAGIDAAAFTGLTLLEQLDLSDNAQLRVVDPTTFRGLGHLHTLHLDRCGLQELGPGLFRGLAALQYLYLQDNNLQALPDNTFRDLGNLTHLFLHGNRIPSVPEHAFRGLHSLDRLLLHQNHVARVHPHAFRDLGRLMTLYLFANNLSMLPAEVLVPLRSLQYLRLNDNPWVCDCRARPLWAWLQKFRGSSSEVPCNLPQRLAGRDLKRLAASDLEGCAVASGPFRPFQTNQLTDEELLGLPKCCQPDAADKASVLEPGRPASAGNALKGRVPPGDTPPGNGSGPRHINDSPFGTLPGSAEPPLTALRPGGSEPPGLPTTGPRRRPGCSRKNRTRSHCRLGQAGSGSSGTGDAEGSGALPALACSLAPLGLALVLWTVLGPC.

Residues 1–26 (MKRASSGGSRLLAWVLWLQAWRVATP) form the signal peptide. Disulfide bonds link C27/C33 and C31/C43. An LRRNT domain is found at 27–57 (CPGACVCYNEPKVTTSCPQQGLQAVPTGIPA). 9 LRR repeats span residues 56-79 (PASS…SFQS), 80-103 (CRNL…AFTG), 105-128 (TLLE…TFRG), 129-152 (LGHL…LFRG), 153-176 (LAAL…TFRD), 178-200 (GNLT…AFRG), 202-224 (HSLD…AFRD), 225-248 (LGRL…VLVP), and 250-273 (RSLQ…PLWA). N82 carries N-linked (GlcNAc...) asparagine glycosylation. Residues 260-310 (NPWVCDCRARPLWAWLQKFRGSSSEVPCNLPQRLAGRDLKRLAASDLEGCA) form the LRRCT domain. Cystine bridges form between C264–C287, C266–C335, and C309–C336. The tract at residues 346 to 446 (VLEPGRPASA…GSSGTGDAEG (101 aa)) is disordered. N-linked (GlcNAc...) asparagine glycosylation occurs at N372. Basic residues predominate over residues 413 to 429 (PRRRPGCSRKNRTRSHC). Residues 434–445 (AGSGSSGTGDAE) show a composition bias toward gly residues. S447 is lipidated: GPI-anchor amidated serine. Residues 448-473 (GALPALACSLAPLGLALVLWTVLGPC) constitute a propeptide, removed in mature form.

Belongs to the Nogo receptor family. In terms of assembly, homodimer. Interacts with MAG. Interacts with RTN4 and OMG. Interacts with LINGO1 and NGFR. Interacts with KIAA0319L. Interacts with OLFM1; this inhibits interaction with LINGO1 and NGFR. N-glycosylated. O-glycosylated. Contains terminal sialic acid groups on its glycan chains. As to expression, detected in embryonic cerebellum, in spinal cord motor neurons and in dorsal root ganglia. Detected in adult brain, in neocortex, hippocampus, striatum, thalamus and dorsal root ganglion neurons (at protein level).

Its subcellular location is the cell membrane. It localises to the membrane raft. It is found in the cell projection. The protein resides in the dendrite. The protein localises to the perikaryon. Its subcellular location is the axon. Functionally, receptor for RTN4, OMG and MAG. Functions as a receptor for the sialylated gangliosides GT1b and GM1. Besides, functions as a receptor for chondroitin sulfate proteoglycans. Can also bind heparin. Intracellular signaling cascades are triggered via the coreceptor NGFR. Signaling mediates activation of Rho and downstream reorganization of the actin cytoskeleton. Mediates axonal growth inhibition. May play a role in regulating axon regeneration and neuronal plasticity in the adult central nervous system. Plays a role in postnatal brain development. Required for normal axon migration across the brain midline and normal formation of the corpus callosum. Protects motoneurons against apoptosis; protection against apoptosis is probably mediated via interaction with MAG. Acts in conjunction with RTN4 and LINGO1 in regulating neuronal precursor cell motility during cortical development. Like other family members, plays a role in restricting the number dendritic spines and the number of synapses that are formed during brain development. The polypeptide is Reticulon-4 receptor (Rtn4r) (Rattus norvegicus (Rat)).